The sequence spans 1293 residues: Enterobactin synthase component F (1293 aa).

Residues 1–301 (MSQHLPLVAA…NVLPLGIHIA (301 aa)) form an elongation/condensation region. Residues 482–887 (SYREMREQVV…ALPDVEQAVT (406 aa)) are adenylatione. One can recognise a Carrier domain in the interval 971-1046 (APKAGSETII…KLATIIDAEE (76 aa)). At S1006 the chain carries O-(pantetheine 4'-phosphoryl)serine. Residues 1066–1293 (PTLFCFHPAS…GPIIRATLNR (228 aa)) are thioesterase. The Proton acceptor; for thioesterase activity role is filled by H1271.

This sequence belongs to the ATP-dependent AMP-binding enzyme family. EntF subfamily. Proteins EntB, EntD, EntE and EntF are the component of the enterobactin synthase. Components probably do not form a stable complex. EntF acts as a catalytic monomer. Interacts with the MbtH-like protein YbdZ. YbdZ binds to the adenylation domain, but does not alter the structure of the domain. It depends on pantetheine 4'-phosphate as a cofactor. 4'-phosphopantetheine is transferred from CoA to a specific serine of apo-EntF by EntD. Holo-EntF so formed is then acylated with seryl-AMP.

The protein localises to the cytoplasm. The catalysed reaction is 3 2,3-dihydroxybenzoate + 3 L-serine + 6 ATP = enterobactin + 6 AMP + 6 diphosphate + 4 H(+). It catalyses the reaction holo-[peptidyl-carrier protein] + L-serine + ATP = L-seryl-[peptidyl-carrier protein] + AMP + diphosphate. The protein operates within siderophore biosynthesis; enterobactin biosynthesis. With respect to regulation, adenylation activity is increased in the presence of the MbtH-like protein YbdZ. In terms of biological role, involved in the biosynthesis of the siderophore enterobactin (enterochelin), which is a macrocyclic trimeric lactone of N-(2,3-dihydroxybenzoyl)-serine. EntF catalyzes the activation of L-serine via ATP-dependent PPi exchange reaction to form seryladenylate. Activated L-serine is loaded onto the peptidyl carrier domain via a thioester linkage to the phosphopanthetheine moiety, forming seryl-S-Ppant-EntF. EntF acts then as the sole catalyst for the formation of the three amide and three ester linkages found in enterobactin, using seryladenylate and 2,3-dihydroxybenzoate-S-Ppant-EntB (DHB-S-Ppant-EntB) as substrates, via the formation of a DHB-Ser-S-Ppant-EntF intermediate. The sequence is that of Enterobactin synthase component F from Escherichia coli (strain K12).